Here is a 686-residue protein sequence, read N- to C-terminus: Delta-like protein 4 (686 aa).

Positions 1–27 are cleaved as a signal peptide; it reads MTPGSRSACRWALLLLAVLWPQQRAAG. At 28–530 the chain is on the extracellular side; it reads SGIFQLRLQE…PVGLPPSFPW (503 aa). 2 disulfide bridges follow: cysteine 51-cysteine 55 and cysteine 62-cysteine 75. N-linked (GlcNAc...) asparagine glycans are attached at residues asparagine 79, asparagine 109, and asparagine 162. One can recognise a DSL domain in the interval 174–218; the sequence is VVCSDNYYGDSCSRLCKKRDDHFGHYECQPDGSLSCLPGWTGKYC. A disulfide bond links cysteine 176 and cysteine 185. Interaction with Notch1 regions lie at residues 186–188 and 192–196; these read SRL and RDDHF. Disulfide bonds link cysteine 189–cysteine 201, cysteine 209–cysteine 218, cysteine 223–cysteine 234, cysteine 227–cysteine 240, cysteine 242–cysteine 251, cysteine 254–cysteine 265, cysteine 260–cysteine 271, cysteine 273–cysteine 282, cysteine 289–cysteine 301, cysteine 295–cysteine 311, cysteine 313–cysteine 322, cysteine 329–cysteine 340, cysteine 334–cysteine 349, cysteine 351–cysteine 360, cysteine 367–cysteine 378, cysteine 372–cysteine 389, cysteine 391–cysteine 400, cysteine 407–cysteine 418, cysteine 412–cysteine 427, cysteine 429–cysteine 438, cysteine 445–cysteine 456, cysteine 450–cysteine 465, cysteine 467–cysteine 476, cysteine 485–cysteine 496, cysteine 490–cysteine 507, and cysteine 509–cysteine 518. EGF-like domains follow at residues 219-252, 256-283, 285-323, 325-361, 363-401, 403-439, 441-477, and 481-519; these read DQPI…PLCN, PHNG…LFCD, DLNY…EHCE, ELSK…QHCE, STLT…SNCE, KVDR…THCE, HISD…RRCE, and TNDA…SRCE. The helical transmembrane segment at 531-551 threads the bilayer; sequence VAVSLGVGLVVLLVLLVMVAV. At 552–686 the chain is on the cytoplasmic side; it reads AVRQLRLRRP…RNECVIATEV (135 aa).

As to quaternary structure, interacts with NOTCH4. Interacts (via N-terminal DSL and MNNL domains) with NOTCH1 (via EGF-like domains).

The protein resides in the cell membrane. Its function is as follows. Involved in the Notch signaling pathway as Notch ligand. Activates NOTCH1 and NOTCH4. Involved in angiogenesis; negatively regulates endothelial cell proliferation and migration and angiogenic sprouting. Essential for retinal progenitor proliferation. Required for suppressing rod fates in late retinal progenitors as well as for proper generation of other retinal cell types. During spinal cord neurogenesis, inhibits V2a interneuron fate. The sequence is that of Delta-like protein 4 from Rattus norvegicus (Rat).